Consider the following 924-residue polypeptide: Periplasmic nitrate reductase (924 aa).

The tat-type signal signal peptide spans Met1–Ala30. In terms of domain architecture, 4Fe-4S Mo/W bis-MGD-type spans Trp35–Asp91. Cys42, Cys45, Cys49, and Cys77 together coordinate [4Fe-4S] cluster. Mo-bis(molybdopterin guanine dinucleotide) is bound by residues Lys79, Gln147, Asn172, Cys176, Trp209–Met216, Met417, Gln421, Asn527, Ser552–Asp553, Lys575, Asp602, and Thr814–Ser823. Residue Trp890 coordinates substrate. Positions 898 and 915 each coordinate Mo-bis(molybdopterin guanine dinucleotide).

It belongs to the prokaryotic molybdopterin-containing oxidoreductase family. NasA/NapA/NarB subfamily. In terms of assembly, component of the periplasmic nitrate reductase NapAB complex composed of NapA and NapB. It depends on [4Fe-4S] cluster as a cofactor. Requires Mo-bis(molybdopterin guanine dinucleotide) as cofactor. In terms of processing, predicted to be exported by the Tat system. The position of the signal peptide cleavage has not been experimentally proven.

The protein localises to the periplasm. The catalysed reaction is 2 Fe(II)-[cytochrome] + nitrate + 2 H(+) = 2 Fe(III)-[cytochrome] + nitrite + H2O. Catalytic subunit of the periplasmic nitrate reductase complex NapAB. Receives electrons from NapB and catalyzes the reduction of nitrate to nitrite. The sequence is that of Periplasmic nitrate reductase from Campylobacter jejuni subsp. jejuni serotype O:6 (strain 81116 / NCTC 11828).